The chain runs to 527 residues: Bromodomain-containing protein 9 (527 aa).

Residues methionine 1–lysine 16 are compositionally biased toward basic residues. The tract at residues methionine 1–valine 54 is disordered. Over residues serine 17–arginine 30 the composition is skewed to basic and acidic residues. The segment covering arginine 31–arginine 41 has biased composition (basic residues). The Bromo domain maps to asparagine 78–alanine 182. The histone H4K5ac H4K8ac and histone H4K5bu H4K8bu binding stretch occupies residues threonine 156–asparagine 158. The span at aspartate 468–glycine 478 shows a compositional bias: basic and acidic residues. The segment at aspartate 468 to asparagine 527 is disordered. Residues serine 479–asparagine 490 show a composition bias toward low complexity.

Binds acetylated histones H3 and H4. Binds butyrylated histone H4.

Its subcellular location is the nucleus. Plays a role in chromatin remodeling and regulation of transcription. Acts as a chromatin reader that recognizes and binds acylated histones: binds histones that are acetylated and/or butyrylated. In Xenopus laevis (African clawed frog), this protein is Bromodomain-containing protein 9 (brd9).